We begin with the raw amino-acid sequence, 198 residues long: Probable GTP-binding protein EngB (198 aa).

The 175-residue stretch at 21 to 195 (NFSEVAFLGR…EDIIIDQTLG (175 aa)) folds into the EngB-type G domain. GTP is bound by residues 29–36 (GRSNVGKS), 56–60 (GKTQL), 81–84 (DLPG), 151–154 (TKCD), and 174–176 (VSN). The Mg(2+) site is built by Ser-36 and Thr-58.

Belongs to the TRAFAC class TrmE-Era-EngA-EngB-Septin-like GTPase superfamily. EngB GTPase family. Mg(2+) serves as cofactor.

Necessary for normal cell division and for the maintenance of normal septation. The protein is Probable GTP-binding protein EngB of Campylobacter jejuni subsp. jejuni serotype O:6 (strain 81116 / NCTC 11828).